Here is a 317-residue protein sequence, read N- to C-terminus: Melanocyte-stimulating hormone receptor (317 aa).

The Extracellular portion of the chain corresponds to 1-37 (MPAQGSQRSXLGSLNSTLMATPSLGLAANQSGPQCLE). 2 N-linked (GlcNAc...) asparagine glycosylation sites follow: asparagine 15 and asparagine 29. Residues 38–63 (VSVPDGLFLCLGLVSLVENMLVVAAI) form a helical membrane-spanning segment. Over 64-72 (AKNRNLHSP) the chain is Cytoplasmic. Residues 73 to 93 (MYCFICCLALSDLLVSISNVL) traverse the membrane as a helical segment. The Extracellular segment spans residues 94 to 118 (ETAVMLLLEAGALAVGATVVQQLDN). A helical transmembrane segment spans residues 119-140 (VIDVLICSSMVSSLCFLGAIAM). Topologically, residues 141–163 (DRYISIFYALRYHSIVTLSRAQW) are cytoplasmic. A helical transmembrane segment spans residues 164–183 (ATAAVWAASILSSTLFIAYY). Residues 184–191 (DRTVVLLC) lie on the Extracellular side of the membrane. The chain crosses the membrane as a helical span at residues 192–211 (LVVFFLAMLVLMAVLYAHML). Residues 212 to 240 (TQACQHVQGITRLHKRQHLVQQGFGLKGA) lie on the Cytoplasmic side of the membrane. Residues 241 to 266 (ATLTILLGVFLLCWGPFFLHLTLIAV) traverse the membrane as a helical segment. The Extracellular segment spans residues 267–279 (CPQHPTCSCVFKN). The helical transmembrane segment at 280–300 (FKLFLALIICNAIVDPLIYAF) threads the bilayer. Over 301 to 317 (RSQELRKTLKEVLLFSW) the chain is Cytoplasmic.

This sequence belongs to the G-protein coupled receptor 1 family. Interacts with MGRN1, but does not undergo MGRN1-mediated ubiquitination; this interaction competes with GNAS-binding and thus inhibits agonist-induced cAMP production. Interacts with OPN3; the interaction results in a decrease in MC1R-mediated cAMP signaling and ultimately a decrease in melanin production in melanocytes.

Its subcellular location is the cell membrane. Its function is as follows. Receptor for MSH (alpha, beta and gamma) and ACTH. The activity of this receptor is mediated by G proteins which activate adenylate cyclase. Mediates melanogenesis, the production of eumelanin (black/brown) and phaeomelanin (red/yellow), via regulation of cAMP signaling in melanocytes. This is Melanocyte-stimulating hormone receptor (MC1R) from Galago senegalensis (Northern lesser bushbaby).